Here is a 324-residue protein sequence, read N- to C-terminus: tRNA dimethylallyltransferase (324 aa).

Position 18–25 (18–25) interacts with ATP; it reads GPTAVGKT. 20 to 25 serves as a coordination point for substrate; that stretch reads TAVGKT. An interaction with substrate tRNA region spans residues 43–46; sequence DSRQ.

It belongs to the IPP transferase family. In terms of assembly, monomer. It depends on Mg(2+) as a cofactor.

It carries out the reaction adenosine(37) in tRNA + dimethylallyl diphosphate = N(6)-dimethylallyladenosine(37) in tRNA + diphosphate. Its function is as follows. Catalyzes the transfer of a dimethylallyl group onto the adenine at position 37 in tRNAs that read codons beginning with uridine, leading to the formation of N6-(dimethylallyl)adenosine (i(6)A). This Salinibacter ruber (strain DSM 13855 / M31) protein is tRNA dimethylallyltransferase.